Consider the following 1132-residue polypeptide: Ubiquitin-associated protein 2 (1132 aa).

The disordered stretch occupies residues 1–29 (MMTSVSNDRCRGAREKPQMPTAHAAQSQK). The span at 8–17 (DRCRGAREKP) shows a compositional bias: basic and acidic residues. In terms of domain architecture, UBA spans 48–92 (KNDSDFEAKVKQLMEVTGKNQDECIVALHDCNGDVNKAINILLEG). Disordered regions lie at residues 95 to 202 (DTTS…YSES), 221 to 248 (GTDEGPEGLAKSHSMSQEPPSKSSYGLK), 331 to 351 (NNQMAPGTANSTSASSYSPQS), 380 to 479 (LKPP…STVS), 602 to 679 (TSSA…VSTL), 713 to 749 (PLSQLSSSLSGHQNSMTSAHATRSTSTPHTHASVEST), 875 to 919 (PYSG…LNPG), 996 to 1033 (GGYGGSSQAPNKSTGSGPGKGVSVSSGTGLPDMTGSVY), 1040 to 1059 (DKQGFHAGTPPPFSLPSALG), and 1087 to 1132 (PHSQ…YWTN). Over residues 109 to 130 (FGRESSENKENREKRTEREASR) the composition is skewed to basic and acidic residues. Position 166 is an omega-N-methylarginine (R166). Residues 168-182 (KRARGRGFGRGRGRG) are compositionally biased toward basic residues. 2 stretches are compositionally biased toward polar residues: residues 233–244 (HSMSQEPPSKSS) and 331–340 (NNQMAPGTAN). The span at 341-351 (STSASSYSPQS) shows a compositional bias: low complexity. Polar residues predominate over residues 392-404 (SSAQQNDTASPPA). A phosphoserine mark is found at S433 and S440. Low complexity-rich tracts occupy residues 436–448 (LSQLSQRQQHQTQ) and 602–618 (TSSALSSTSPVTTSSSY). Residues 619 to 630 (DQSSVHTRIAYQ) are compositionally biased toward polar residues. S631 carries the phosphoserine modification. Residues 631–644 (SSASPPDSAPGSVA) show a composition bias toward low complexity. Residues 652–662 (SQHTVDTTSSV) show a composition bias toward polar residues. Residues 713–722 (PLSQLSSSLS) are compositionally biased toward low complexity. Polar residues predominate over residues 723–742 (GHQNSMTSAHATRSTSTPHT). Positions 897 to 914 (PAQAQQSQSQTHHTAQQP) are enriched in low complexity. The segment covering 1101 to 1115 (PSGSGQRSQPSSLQP) has biased composition (low complexity). Over residues 1116–1132 (KSQASKPTYGSAPYWTN) the composition is skewed to polar residues.

In terms of assembly, may interact with ANXA2.

The protein localises to the nucleus. It localises to the chromosome. It is found in the cytoplasm. Its function is as follows. Recruits the ubiquitination machinery to RNA polymerase II for polyubiquitination, removal and degradation, when the transcription-coupled nucleotide excision repair (TC-NER) machinery fails to resolve DNA damage. May promote the degradation of ANXA2. The sequence is that of Ubiquitin-associated protein 2 from Mus musculus (Mouse).